Here is a 666-residue protein sequence, read N- to C-terminus: Probable potassium transport system protein Kup (666 aa).

The next 12 membrane-spanning stretches (helical) occupy residues 16–36 (GFII…LYTM), 58–78 (ISLI…LIAL), 100–120 (PWLI…GALT), 141–161 (IYQN…VLFG), 165–185 (FGTG…FSFL), 221–241 (IFIL…YSDL), 253–273 (WPFV…WILA), 292–312 (LTVY…QALI), 343–363 (LYIP…VLYF), 373–393 (YGLA…YYLI), 399–419 (PFLA…FFWA), and 424–444 (FMHG…VMFI).

It belongs to the HAK/KUP transporter (TC 2.A.72) family.

The protein resides in the cell membrane. It carries out the reaction K(+)(in) + H(+)(in) = K(+)(out) + H(+)(out). In terms of biological role, transport of potassium into the cell. Likely operates as a K(+):H(+) symporter. In Streptococcus pyogenes serotype M18 (strain MGAS8232), this protein is Probable potassium transport system protein Kup.